The chain runs to 246 residues: Probable hydroxyethylthiazole kinase (246 aa).

Position 50 (Met50) interacts with substrate. 2 residues coordinate ATP: Arg125 and Thr145. Residue Gly172 participates in substrate binding.

It belongs to the Thz kinase family. It depends on Mg(2+) as a cofactor.

It catalyses the reaction 5-(2-hydroxyethyl)-4-methylthiazole + ATP = 4-methyl-5-(2-phosphooxyethyl)-thiazole + ADP + H(+). It participates in cofactor biosynthesis; thiamine diphosphate biosynthesis; 4-methyl-5-(2-phosphoethyl)-thiazole from 5-(2-hydroxyethyl)-4-methylthiazole: step 1/1. Functionally, catalyzes the phosphorylation of the hydroxyl group of 4-methyl-5-beta-hydroxyethylthiazole (THZ). This is Probable hydroxyethylthiazole kinase (thiM) from Agrobacterium fabrum (strain C58 / ATCC 33970) (Agrobacterium tumefaciens (strain C58)).